The primary structure comprises 351 residues: Flagellin (351 aa).

This sequence belongs to the bacterial flagellin family.

Its subcellular location is the secreted. It localises to the bacterial flagellum. Its function is as follows. Flagellin is the subunit protein which polymerizes to form the filaments of bacterial flagella. This is Flagellin (fliC) from Serratia marcescens.